We begin with the raw amino-acid sequence, 474 residues long: tRNA-2-methylthio-N(6)-dimethylallyladenosine synthase (474 aa).

An MTTase N-terminal domain is found at 3–120; it reads KKLHIKTWGC…LPEMINHVQG (118 aa). [4Fe-4S] cluster-binding residues include Cys-12, Cys-49, Cys-83, Cys-157, Cys-161, and Cys-164. The 233-residue stretch at 143–375 folds into the Radical SAM core domain; the sequence is RAEGPTAFVS…QQRISQQAME (233 aa). Residues 378 to 441 form the TRAM domain; it reads RKMVGTVQRV…ASSLRGILLR (64 aa).

The protein belongs to the methylthiotransferase family. MiaB subfamily. As to quaternary structure, monomer. [4Fe-4S] cluster serves as cofactor.

It localises to the cytoplasm. The enzyme catalyses N(6)-dimethylallyladenosine(37) in tRNA + (sulfur carrier)-SH + AH2 + 2 S-adenosyl-L-methionine = 2-methylsulfanyl-N(6)-dimethylallyladenosine(37) in tRNA + (sulfur carrier)-H + 5'-deoxyadenosine + L-methionine + A + S-adenosyl-L-homocysteine + 2 H(+). Its function is as follows. Catalyzes the methylthiolation of N6-(dimethylallyl)adenosine (i(6)A), leading to the formation of 2-methylthio-N6-(dimethylallyl)adenosine (ms(2)i(6)A) at position 37 in tRNAs that read codons beginning with uridine. In Yersinia pseudotuberculosis serotype O:1b (strain IP 31758), this protein is tRNA-2-methylthio-N(6)-dimethylallyladenosine synthase.